The following is a 472-amino-acid chain: Siroheme synthase 1 (472 aa).

A precorrin-2 dehydrogenase /sirohydrochlorin ferrochelatase region spans residues 1–203 (MDYLPLFADL…GQLTEAENEL (203 aa)). Residues 22–23 (EV) and 43–44 (QT) contribute to the NAD(+) site. Ser-128 is subject to Phosphoserine. Residues 215–472 (GEVALVGAGP…AISPSVVNLA (258 aa)) are uroporphyrinogen-III C-methyltransferase. S-adenosyl-L-methionine is bound at residue Pro-224. The active-site Proton acceptor is Asp-247. Lys-269 (proton donor) is an active-site residue. S-adenosyl-L-methionine is bound by residues 300–302 (GGD), Ile-305, 330–331 (TA), Met-382, and Gly-411.

In the N-terminal section; belongs to the precorrin-2 dehydrogenase / sirohydrochlorin ferrochelatase family. This sequence in the C-terminal section; belongs to the precorrin methyltransferase family.

It catalyses the reaction uroporphyrinogen III + 2 S-adenosyl-L-methionine = precorrin-2 + 2 S-adenosyl-L-homocysteine + H(+). It carries out the reaction precorrin-2 + NAD(+) = sirohydrochlorin + NADH + 2 H(+). The catalysed reaction is siroheme + 2 H(+) = sirohydrochlorin + Fe(2+). The protein operates within cofactor biosynthesis; adenosylcobalamin biosynthesis; precorrin-2 from uroporphyrinogen III: step 1/1. It functions in the pathway cofactor biosynthesis; adenosylcobalamin biosynthesis; sirohydrochlorin from precorrin-2: step 1/1. Its pathway is porphyrin-containing compound metabolism; siroheme biosynthesis; precorrin-2 from uroporphyrinogen III: step 1/1. It participates in porphyrin-containing compound metabolism; siroheme biosynthesis; siroheme from sirohydrochlorin: step 1/1. The protein operates within porphyrin-containing compound metabolism; siroheme biosynthesis; sirohydrochlorin from precorrin-2: step 1/1. Its function is as follows. Multifunctional enzyme that catalyzes the SAM-dependent methylations of uroporphyrinogen III at position C-2 and C-7 to form precorrin-2 via precorrin-1. Then it catalyzes the NAD-dependent ring dehydrogenation of precorrin-2 to yield sirohydrochlorin. Finally, it catalyzes the ferrochelation of sirohydrochlorin to yield siroheme. The chain is Siroheme synthase 1 from Yersinia pseudotuberculosis serotype I (strain IP32953).